Reading from the N-terminus, the 217-residue chain is Thiopurine S-methyltransferase (217 aa).

4 residues coordinate S-adenosyl-L-methionine: tryptophan 10, leucine 45, glutamate 66, and arginine 127.

It belongs to the class I-like SAM-binding methyltransferase superfamily. TPMT family.

It localises to the cytoplasm. It catalyses the reaction S-adenosyl-L-methionine + a thiopurine = S-adenosyl-L-homocysteine + a thiopurine S-methylether.. This Acinetobacter baylyi (strain ATCC 33305 / BD413 / ADP1) protein is Thiopurine S-methyltransferase.